The sequence spans 244 residues: Krueppel-like factor 9 (244 aa).

Disordered regions lie at residues 26-51 (EHGG…GDPG) and 79-143 (PSVC…EKRH). Basic and acidic residues predominate over residues 32-51 (EAERLRLPEREVTKEHGDPG). Ser122 is modified (phosphoserine). Positions 134–143 (KGKHASEKRH) are enriched in basic residues. 3 C2H2-type zinc fingers span residues 143 to 167 (HKCP…YRVH), 173 to 197 (FPCT…YRTH), and 203 to 225 (FRCP…ARRH).

The protein belongs to the Sp1 C2H2-type zinc-finger protein family. Interacts with ZZEF1.

Its subcellular location is the nucleus. Functionally, transcription factor that binds to GC box promoter elements. Selectively activates mRNA synthesis from genes containing tandem repeats of GC boxes but represses genes with a single GC box. Acts as an epidermal circadian transcription factor regulating keratinocyte proliferation. This Mus musculus (Mouse) protein is Krueppel-like factor 9 (Klf9).